The primary structure comprises 273 residues: SKA complex subunit 1 homolog (273 aa).

The stretch at 77-97 (KKLVQRSLKEEEKLQHMLANL) forms a coiled coil.

The protein belongs to the SKA1 family.

The chain is SKA complex subunit 1 homolog from Zea mays (Maize).